A 400-amino-acid chain; its full sequence is Subtilisin-like protease 7 (400 aa).

The N-terminal stretch at 1–20 (MGFITKAIPLALAAASVING) is a signal peptide. A propeptide spanning residues 21–119 (AEILETRAGV…IERDARVQIN (99 aa)) is cleaved from the precursor. One can recognise an Inhibitor I9 domain in the interval 36–118 (KYIVVMNDGI…YIERDARVQI (83 aa)). In terms of domain architecture, Peptidase S8 spans 129–400 (SWGLARVGSK…SKLINNGSGM (272 aa)). Active-site charge relay system residues include aspartate 161 and histidine 192. N-linked (GlcNAc...) asparagine glycosylation occurs at asparagine 252. The active-site Charge relay system is serine 346. The N-linked (GlcNAc...) asparagine glycan is linked to asparagine 396.

This sequence belongs to the peptidase S8 family.

The protein localises to the secreted. Secreted subtilisin-like serine protease with keratinolytic activity that contributes to pathogenicity. In Trichophyton violaceum, this protein is Subtilisin-like protease 7 (SUB7).